A 94-amino-acid polypeptide reads, in one-letter code: Co-chaperonin GroES (94 aa).

It belongs to the GroES chaperonin family. Heptamer of 7 subunits arranged in a ring. Interacts with the chaperonin GroEL.

It is found in the cytoplasm. Together with the chaperonin GroEL, plays an essential role in assisting protein folding. The GroEL-GroES system forms a nano-cage that allows encapsulation of the non-native substrate proteins and provides a physical environment optimized to promote and accelerate protein folding. GroES binds to the apical surface of the GroEL ring, thereby capping the opening of the GroEL channel. The polypeptide is Co-chaperonin GroES (Streptococcus mitis).